Consider the following 564-residue polypeptide: Bifunctional sesquiterpene synthase 1 (564 aa).

Mg(2+) is bound by residues aspartate 317, aspartate 321, aspartate 461, and glutamate 469. The DDXXD motif motif lies at 317–321 (DDTFD).

The protein belongs to the terpene synthase family. It depends on Mg(2+) as a cofactor.

The enzyme catalyses (2E,6E)-farnesyl diphosphate = alpha-copaene + diphosphate. The catalysed reaction is (2E,6E)-farnesyl diphosphate = delta-cadinene + diphosphate. Its pathway is secondary metabolite biosynthesis; terpenoid biosynthesis. Its function is as follows. Sesquiterpene synthase converting farnesyl diphosphate to alpha copaene and delta-cadinene as the major products. The polypeptide is Bifunctional sesquiterpene synthase 1 (Phyla dulcis (Aztec sweet herb)).